Consider the following 811-residue polypeptide: Beta-catenin homolog sys-1 (811 aa).

The interval 1 to 105 (MHSTGEPQRG…SRGPAAPAQN (105 aa)) is disordered. Positions 64-103 (QQQQMTPQALSTQQQQQVQQQQQRQLYSSPSPSRGPAAPA) are enriched in low complexity.

Interacts with TCF transcription factor pop-1 (via N-terminal region); interaction is direct.

Its subcellular location is the nucleus. The protein resides in the cytoplasm. It is found in the cytoplasmic granule. It localises to the cytoskeleton. The protein localises to the microtubule organizing center. Its subcellular location is the centrosome. The protein resides in the chromosome. It is found in the centromere. It localises to the kinetochore. Functionally, transcription coregulator. Part of the Wnt signaling asymmetry pathway, probably acting downstream of putative frizzled ligand mom-2, Wnt/frizzled receptors lin-17 and mom-5, and dishevelled homolog dsh-2. Activates or represses target gene expression, depending on upstream Wnt signals and interactions with transcription factors, such as pop-1. Required for the activation of Wnt-responsive genes in the E blastomere; thereby leading to a role in endoderm specification and gut development. Reciprocal distribution patterns of sys-1 and pop-1/TCF in the daughters of anterior-posterior cell divisions functions in specifying cell fate; a higher sys-1 to pop-1 ratio promotes the posterior cell fate, whereas a low sys-1 to pop-1 ratio promotes the anterior fate. Represses expression of homeobox ttx-3 in neuroblasts of the SIAD/SIBV lineage, perhaps acting by blocking its transcriptional activation by a complex consisting of ref-2 and pop-1. Required for early organization of the hermaphrodite, but not the male, gonad; involved in generation of regulatory cells, known as the distal tip cells (DTC), and in formation of the somatic gonadal primordium. Involved in regulating asymmetric divisions of the somatic gonadal precursor cells (SGP), Z1 and Z4. The protein is Beta-catenin homolog sys-1 of Caenorhabditis elegans.